An 886-amino-acid chain; its full sequence is Probable mixed-linked glucan synthase 8 (886 aa).

A run of 2 helical transmembrane segments spans residues 87 to 107 (ILLH…VLFF) and 118 to 138 (GMFF…SWLL). Residue Asp-213 is part of the active site. Positions 413 and 415 each coordinate substrate. Asp-577 is a catalytic residue. 6 helical membrane passes run 659 to 679 (VFLL…IFYI), 683 to 703 (FPTY…IGMV), 723 to 743 (IIGA…KCFG), 775 to 795 (LLFP…AAIG), 812 to 832 (LGLV…LGIM), and 840 to 860 (YILF…DIAI).

This sequence belongs to the glycosyltransferase 2 family. Plant cellulose synthase-like F subfamily.

Its subcellular location is the golgi apparatus membrane. Its function is as follows. May catalyze both beta-1,3 and beta-1,4 glycosidic linkage on beta-D-glucan. Essential for (1,3;1,4)-beta-D-glucans synthesis in grasses and cereals (Poaceae). The mixed-linked glucans (which are not present in walls of dicotyledons or most other monocotyledonous plants) are particularly important constituents of the walls of the starchy endosperm and aleurone cells of cereal grains such as oats, wheat, rice and barley. They can account for up to 70% by weight of the wall. This chain is Probable mixed-linked glucan synthase 8 (CSFL8), found in Oryza sativa subsp. japonica (Rice).